Reading from the N-terminus, the 354-residue chain is MGIEPNILENKKRHIEICLNKNDVKGGCNFLKFIKLKHNALSDFNFSEISLKEEIFGYNINMPVFISSMTGGGKQGNDFNKSLVKIANYLKIPIGLGSFKLLFKYPEYIRDFSLKRYAYDIPLFANIGAVQIVEFGISRIAEMIKRLEVDAIVTHLNAGQELMNVNGDRNFKGIKESIAKLADFLSVPLIVKETGFGISPNDVKELLKLGVSYIDLAGSGGTNWVLVEGIRSNNLNVASCFSDWGIPSIFTLLGIDDSLKANVFASGGYETGMDIAKGIALGAKLIGVAAVVLRAFYNSGEDAVLSLFSDYEHVLKMSMFLSGSKSLSELRKNKYFLSSYLLAELGVFKQFYET.

11–12 (KK) serves as a coordination point for substrate. FMN is bound by residues S67, 68 to 70 (SMT), S98, and N126. Residue 98 to 100 (SFK) coordinates substrate. Q160 is a binding site for substrate. E161 is a Mg(2+) binding site. FMN contacts are provided by residues K192, T222, and 289-290 (AA).

The protein belongs to the IPP isomerase type 2 family. In terms of assembly, homooctamer. Dimer of tetramers. The cofactor is FMN. NADPH is required as a cofactor. It depends on Mg(2+) as a cofactor.

Its subcellular location is the cytoplasm. The catalysed reaction is isopentenyl diphosphate = dimethylallyl diphosphate. Involved in the biosynthesis of isoprenoids. Catalyzes the 1,3-allylic rearrangement of the homoallylic substrate isopentenyl (IPP) to its allylic isomer, dimethylallyl diphosphate (DMAPP). This is Isopentenyl-diphosphate delta-isomerase from Borrelia garinii subsp. bavariensis (strain ATCC BAA-2496 / DSM 23469 / PBi) (Borreliella bavariensis).